Here is a 118-residue protein sequence, read N- to C-terminus: Large ribosomal subunit protein bL20c (118 aa).

The protein belongs to the bacterial ribosomal protein bL20 family.

It localises to the plastid. It is found in the chloroplast. In terms of biological role, binds directly to 23S ribosomal RNA and is necessary for the in vitro assembly process of the 50S ribosomal subunit. It is not involved in the protein synthesizing functions of that subunit. The protein is Large ribosomal subunit protein bL20c of Adiantum capillus-veneris (Maidenhair fern).